Consider the following 145-residue polypeptide: Leghemoglobin-1 (145 aa).

One can recognise a Globin domain in the interval 3-145 (AFSDKQEALV…ELAAAIKKAY (143 aa)). A nitrated tyrosine mark is found at Tyr26 and Tyr31. Ser46 contributes to the heme b binding site. Residue Ser46 is modified to Phosphoserine. His62 is an O2 binding site. Heme b contacts are provided by Lys65, His93, and Lys96. Tyr134 is subject to Nitrated tyrosine.

It belongs to the plant globin family. As to quaternary structure, monomer. Post-translationally, nitrated in effective nodules and particularly in hypoxic conditions; this mechanism may play a protective role in the symbiosis by buffering toxic peroxynitrite NO(2)(-). Nitration level decrease during nodule senescence. In terms of processing, phosphorylation at Ser-46 disrupts the molecular environment of its porphyrin ring oxygen binding pocket, thus leading to a reduced oxygen consumption and to the delivery of oxygen O(2) to symbiosomes. As to expression, root nodules.

It localises to the cytoplasm. It is found in the cytosol. The protein localises to the nucleus. In terms of biological role, leghemoglobin that reversibly binds oxygen O(2) through a pentacoordinated heme iron. In root nodules, facilitates the diffusion of oxygen to the bacteroids while preventing the bacterial nitrogenase from being inactivated by buffering dioxygen, nitric oxide and carbon monoxide, and promoting the formation of reactive oxygen species (ROS, e.g. H(2)O(2)). This role is essential for symbiotic nitrogen fixation (SNF). This Vigna unguiculata (Cowpea) protein is Leghemoglobin-1.